The chain runs to 29 residues: Myosin heavy chain, muscle (29 aa).

Residues 1-16 (SKYESEGVARSEELQE) are compositionally biased toward basic and acidic residues. Residues 1 to 29 (SKYESEGVARSEELQEVHQAFADAGRKPI) form a disordered region.

Muscle myosin is a hexameric protein that consists of 2 heavy chain subunits (MHC), 2 alkali light chain subunits (MLC) and 2 regulatory light chain subunits (MLC-2).

The protein localises to the cytoplasm. Its subcellular location is the myofibril. Muscle contraction. The protein is Myosin heavy chain, muscle of Bombyx mori (Silk moth).